A 207-amino-acid polypeptide reads, in one-letter code: Large ribosomal subunit protein bL25 (207 aa).

A disordered region spans residues 186-207 (SKPRGGAGAEGEADAEGEAAAE). Over residues 196–207 (GEADAEGEAAAE) the composition is skewed to acidic residues.

Belongs to the bacterial ribosomal protein bL25 family. CTC subfamily. As to quaternary structure, part of the 50S ribosomal subunit; part of the 5S rRNA/L5/L18/L25 subcomplex. Contacts the 5S rRNA. Binds to the 5S rRNA independently of L5 and L18.

In terms of biological role, this is one of the proteins that binds to the 5S RNA in the ribosome where it forms part of the central protuberance. This chain is Large ribosomal subunit protein bL25, found in Methylobacillus flagellatus (strain ATCC 51484 / DSM 6875 / VKM B-1610 / KT).